Reading from the N-terminus, the 313-residue chain is Ribosomal RNA small subunit methyltransferase H (313 aa).

Residues 35–37, Asp-55, Phe-79, Asp-101, and Gln-108 each bind S-adenosyl-L-methionine; that span reads GGH.

This sequence belongs to the methyltransferase superfamily. RsmH family.

The protein resides in the cytoplasm. It carries out the reaction cytidine(1402) in 16S rRNA + S-adenosyl-L-methionine = N(4)-methylcytidine(1402) in 16S rRNA + S-adenosyl-L-homocysteine + H(+). In terms of biological role, specifically methylates the N4 position of cytidine in position 1402 (C1402) of 16S rRNA. The polypeptide is Ribosomal RNA small subunit methyltransferase H (Escherichia coli O81 (strain ED1a)).